A 145-amino-acid polypeptide reads, in one-letter code: Cell division protein SepF (145 aa).

The segment covering 23-41 (PQEVSKTKDENAKPKHETP) has biased composition (basic and acidic residues). The tract at residues 23–42 (PQEVSKTKDENAKPKHETPK) is disordered.

It belongs to the SepF family. Homodimer. Interacts with FtsZ.

The protein resides in the cytoplasm. Functionally, cell division protein that is part of the divisome complex and is recruited early to the Z-ring. Probably stimulates Z-ring formation, perhaps through the cross-linking of FtsZ protofilaments. Its function overlaps with FtsA. The polypeptide is Cell division protein SepF (Caldicellulosiruptor bescii (strain ATCC BAA-1888 / DSM 6725 / KCTC 15123 / Z-1320) (Anaerocellum thermophilum)).